The sequence spans 366 residues: Alanine racemase (366 aa).

Catalysis depends on Lys33, which acts as the Proton acceptor; specific for D-alanine. Lys33 bears the N6-(pyridoxal phosphate)lysine mark. A substrate-binding site is contributed by Arg129. The Proton acceptor; specific for L-alanine role is filled by Tyr253. Met301 contributes to the substrate binding site.

It belongs to the alanine racemase family. Pyridoxal 5'-phosphate is required as a cofactor.

The enzyme catalyses L-alanine = D-alanine. It participates in amino-acid biosynthesis; D-alanine biosynthesis; D-alanine from L-alanine: step 1/1. Catalyzes the interconversion of L-alanine and D-alanine. May also act on other amino acids. The chain is Alanine racemase (alr) from Xanthomonas axonopodis pv. citri (strain 306).